The chain runs to 1241 residues: Anion exchange protein 2 (1241 aa).

Positions 1–240 (MSSAPRRPAK…RSYNLQERRR (240 aa)) are disordered. Residues 1 to 707 (MSSAPRRPAK…SDFRDALDPQ (707 aa)) lie on the Cytoplasmic side of the membrane. Basic and acidic residues-rich tracts occupy residues 37–49 (ELHR…RFEE) and 58–75 (GGEE…EYHR). Basic residues-rich tracts occupy residues 76 to 85 (QSSHHIHHPL) and 94 to 110 (RRRK…RRRP). Ser-113, Ser-132, Ser-144, Ser-170, Ser-172, and Ser-173 each carry phosphoserine. Residues 120 to 133 (TIEEGEEDEDEASE) are compositionally biased toward acidic residues. Residues 141 to 155 (TQPSPVSTPSSVQFF) are compositionally biased toward low complexity. Thr-183 bears the Phosphothreonine mark. The segment covering 189–209 (GAQAGTQVEEAEAEAVAVASG) has biased composition (low complexity). Over residues 210-219 (TAGGDDGGAS) the composition is skewed to gly residues. Residue Ser-243 is modified to Phosphoserine. At Thr-257 the chain carries Phosphothreonine. Lys-274 is subject to N6-methyllysine. A disordered region spans residues 288 to 320 (LVRKNAKGSTQSGREGREPGPTPRARPRAPHKP). At Ser-443 the chain carries Phosphoserine. The disordered stretch occupies residues 449 to 471 (SLLGHHHGQGAESDPHVTEPLMG). Helical transmembrane passes span 708 to 731 (CLAA…GLLG), 737 to 774 (LIGV…LLVF), 784 to 816 (SNHL…SFLV), and 826 to 847 (IFAF…VKIF). Residues 708 to 1241 (CLAAVIFIYF…DEYNEMPMPV (534 aa)) form a membrane (anion exchange) region. Residues 848-900 (QEHPLHGCSASNSSEVDGGENMTWAGARPTLGPGNRSLAGQSGQGKPRGQPNT) are Extracellular-facing. Asn-859, Asn-868, and Asn-882 each carry an N-linked (GlcNAc...) asparagine glycan. The chain crosses the membrane as a helical span at residues 901-918 (ALLSLVLMAGTFFIAFFL). The Cytoplasmic portion of the chain corresponds to 919–933 (RKFKNSRFFPGRIRR). The next 5 membrane-spanning stretches (helical) occupy residues 934 to 954 (VIGD…DYSI), 988 to 1010 (PFPV…LIFM), 1036 to 1059 (LLLI…AATV), 1091 to 1136 (VTGL…IQFY), and 1163 to 1199 (MHLF…TVPL). Cys-1173 is lipidated: S-palmitoyl cysteine.

It belongs to the anion exchanger (TC 2.A.31) family. As to expression, expressed in the liver, stomach, kidney, prostate, thyroid and rectum. In terms of tissue distribution, expressed in the liver and kidney.

The protein resides in the apical cell membrane. Its subcellular location is the basolateral cell membrane. It carries out the reaction hydrogencarbonate(in) + chloride(out) = hydrogencarbonate(out) + chloride(in). In terms of biological role, sodium-independent anion exchanger which mediates the electroneutral exchange of chloride for bicarbonate ions across the cell membrane. Plays an important role in osteoclast differentiation and function. Regulates bone resorption and calpain-dependent actin cytoskeleton organization in osteoclasts via anion exchange-dependent control of pH. Essential for intracellular pH regulation in CD8(+) T-cells upon CD3 stimulation, modulating CD8(+) T-cell responses. The chain is Anion exchange protein 2 (SLC4A2) from Homo sapiens (Human).